A 178-amino-acid polypeptide reads, in one-letter code: MSGGKYVDSEGHLYTVPIREQGNIYKPNNKTMADEMNEKQVYDAHTKEIDLVNRDPKHLNDDVVKIDFEDVIAEPEGTHSFDGIWKASFTTFTVTKYWFYRLLSAVFGIPMALIWGIYFAIVSFLHIWVVVPYIKSFLIEIQCISRVYSIYIHTFCDPLFEAFGKVFSNIRINTQKEI.

Ser2 is modified (N-acetylserine). Position 2 is a phosphoserine (Ser2). A required for homooligomerization region spans residues 2–94; the sequence is SGGKYVDSEG…WKASFTTFTV (93 aa). Residues 2–104 lie on the Cytoplasmic side of the membrane; the sequence is SGGKYVDSEG…TKYWFYRLLS (103 aa). Lys5 is modified (N6-acetyllysine; alternate). Lys5 is covalently cross-linked (Glycyl lysine isopeptide (Lys-Gly) (interchain with G-Cter in ubiquitin); alternate). The residue at position 6 (Tyr6) is a Phosphotyrosine. At Ser9 the chain carries Phosphoserine. Phosphotyrosine; by ABL1 is present on Tyr14. Tyr25 is subject to Phosphotyrosine. Residues Lys26, Lys30, Lys39, Lys47, and Lys57 each participate in a glycyl lysine isopeptide (Lys-Gly) (interchain with G-Cter in ubiquitin) cross-link. An interaction with CAVIN3 region spans residues 82-94; that stretch reads DGIWKASFTTFTV. An intramembrane region (helical) is located at residues 105–125; that stretch reads AVFGIPMALIWGIYFAIVSFL. Residues 126 to 178 are Cytoplasmic-facing; sequence HIWVVVPYIKSFLIEIQCISRVYSIYIHTFCDPLFEAFGKVFSNIRINTQKEI. Residues 131 to 142 are interacts with SPRY1, SPRY2, SPRY3 and SPRY4; the sequence is VPYIKSFLIEIQ. 2 S-palmitoyl cysteine lipidation sites follow: Cys143 and Cys156. Residues 149 to 160 are interacts with SPRY1, SPRY2, and SPRY4; that stretch reads SIYIHTFCDPLF. The interacts with SPRY1, SPRY2, SPRY3 and SPRY4 stretch occupies residues 167 to 178; it reads FSNIRINTQKEI.

Belongs to the caveolin family. As to quaternary structure, homooligomer. Interacts (via the N-terminus) with DPP4; the interaction is direct. Forms a stable heterooligomeric complex with CAV2 that targets to lipid rafts and drives caveolae formation. Interacts with PACSIN2; this interaction induces membrane tubulation. Interacts with BMX, BTK, CTNNB1, CDH1, GLIPR2, JUP, NOSTRIN, SNAP25 and STX1A. Interacts with SLC7A9. Interacts with TGFBR1. Interacts with CAVIN3 (via leucine-zipper domain) in a cholesterol-sensitive manner. Interacts with CAVIN1. Interacts with EHD2 in a cholesterol-dependent manner. Forms a ternary complex with UBXN6 and VCP; mediates CAV1 targeting to lysosomes for degradation. Interacts with ABCG1; this interaction regulates ABCG1-mediated cholesterol efflux. Interacts with NEU3; this interaction enhances NEU3 sialidase activity within caveola. Interacts (via C-terminus) with SPRY1, SPRY2 (via C-terminus), SPRY3, and SPRY4. In terms of processing, phosphorylated at Tyr-14 by ABL1 in response to oxidative stress. Ubiquitinated. Undergo monoubiquitination and multi- and/or polyubiquitination. Monoubiquitination of N-terminal lysines promotes integration in a ternary complex with UBXN6 and VCP which promotes oligomeric CAV1 targeting to lysosomes for degradation. Ubiquitinated by ZNRF1; leading to degradation and modulation of the TLR4-mediated immune response.

It is found in the golgi apparatus membrane. It localises to the cell membrane. The protein resides in the membrane. Its subcellular location is the caveola. The protein localises to the membrane raft. Functionally, may act as a scaffolding protein within caveolar membranes. Forms a stable heterooligomeric complex with CAV2 that targets to lipid rafts and drives caveolae formation. Mediates the recruitment of CAVIN proteins (CAVIN1/2/3/4) to the caveolae. Interacts directly with G-protein alpha subunits and can functionally regulate their activity. Involved in the costimulatory signal essential for T-cell receptor (TCR)-mediated T-cell activation. Its binding to DPP4 induces T-cell proliferation and NF-kappa-B activation in a T-cell receptor/CD3-dependent manner. Recruits CTNNB1 to caveolar membranes and may regulate CTNNB1-mediated signaling through the Wnt pathway. Negatively regulates TGFB1-mediated activation of SMAD2/3 by mediating the internalization of TGFBR1 from membrane rafts leading to its subsequent degradation. Binds 20(S)-hydroxycholesterol (20(S)-OHC). This is Caveolin-1 (CAV1) from Rhinolophus ferrumequinum (Greater horseshoe bat).